The chain runs to 206 residues: Large ribosomal subunit protein uL4 (206 aa).

The tract at residues 63 to 97 (MYKQKGTGRARHHSARAPQFRGGGKAHGPVVRSHE) is disordered. A compositionally biased stretch (basic residues) spans 64-77 (YKQKGTGRARHHSA).

It belongs to the universal ribosomal protein uL4 family. In terms of assembly, part of the 50S ribosomal subunit.

One of the primary rRNA binding proteins, this protein initially binds near the 5'-end of the 23S rRNA. It is important during the early stages of 50S assembly. It makes multiple contacts with different domains of the 23S rRNA in the assembled 50S subunit and ribosome. Functionally, forms part of the polypeptide exit tunnel. The sequence is that of Large ribosomal subunit protein uL4 from Rhizobium rhizogenes (strain K84 / ATCC BAA-868) (Agrobacterium radiobacter).